Here is a 406-residue protein sequence, read N- to C-terminus: Serine/threonine transporter SstT (406 aa).

The next 9 helical transmembrane spans lie at 15 to 35 (LVIQ…VSPS), 47 to 67 (FVGA…AASI), 81 to 101 (IIVM…VLSF), 140 to 160 (ALMS…GLAL), 191 to 211 (FGIF…ALAG), 215 to 235 (LLVV…PAMV), 289 to 309 (IPLG…TLTL), 315 to 335 (MGIE…AVSA), and 362 to 382 (IAMQ…SAET).

The protein belongs to the dicarboxylate/amino acid:cation symporter (DAACS) (TC 2.A.23) family.

It localises to the cell inner membrane. The enzyme catalyses L-serine(in) + Na(+)(in) = L-serine(out) + Na(+)(out). It catalyses the reaction L-threonine(in) + Na(+)(in) = L-threonine(out) + Na(+)(out). Involved in the import of serine and threonine into the cell, with the concomitant import of sodium (symport system). The chain is Serine/threonine transporter SstT from Vibrio vulnificus (strain YJ016).